A 272-amino-acid chain; its full sequence is Probable ribosomal RNA small subunit methyltransferase A (272 aa).

S-adenosyl-L-methionine contacts are provided by asparagine 23, leucine 25, glycine 50, glutamate 71, aspartate 95, and asparagine 110.

Belongs to the class I-like SAM-binding methyltransferase superfamily. rRNA adenine N(6)-methyltransferase family. RsmA subfamily.

Its subcellular location is the cytoplasm. Functionally, specifically dimethylates two adjacent adenosines in the loop of a conserved hairpin near the 3'-end of 16S rRNA in the 30S particle. May play a critical role in biogenesis of 30S subunits. The sequence is that of Probable ribosomal RNA small subunit methyltransferase A from Thermococcus onnurineus (strain NA1).